Consider the following 124-residue polypeptide: Small ribosomal subunit protein uS13 (124 aa).

A disordered region spans residues 98–124 (VRGQRTRCNARTRKGPRKTVGAKRKEK).

The protein belongs to the universal ribosomal protein uS13 family. In terms of assembly, part of the 30S ribosomal subunit. Forms a loose heterodimer with protein S19. Forms two bridges to the 50S subunit in the 70S ribosome.

Functionally, located at the top of the head of the 30S subunit, it contacts several helices of the 16S rRNA. In the 70S ribosome it contacts the 23S rRNA (bridge B1a) and protein L5 of the 50S subunit (bridge B1b), connecting the 2 subunits; these bridges are implicated in subunit movement. Contacts the tRNAs in the A and P-sites. This chain is Small ribosomal subunit protein uS13, found in Dictyoglomus turgidum (strain DSM 6724 / Z-1310).